The following is a 224-amino-acid chain: Ribonuclease 3 (224 aa).

An RNase III domain is found at L5–G127. E40 contacts Mg(2+). D44 is a catalytic residue. Positions 113 and 116 each coordinate Mg(2+). Residue E116 is part of the active site. A DRBM domain is found at D154–G224.

This sequence belongs to the ribonuclease III family. In terms of assembly, homodimer. Mg(2+) is required as a cofactor.

It is found in the cytoplasm. It carries out the reaction Endonucleolytic cleavage to 5'-phosphomonoester.. Functionally, digests double-stranded RNA. Involved in the processing of primary rRNA transcript to yield the immediate precursors to the large and small rRNAs (23S and 16S). Processes some mRNAs, and tRNAs when they are encoded in the rRNA operon. Processes pre-crRNA and tracrRNA of type II CRISPR loci if present in the organism. The chain is Ribonuclease 3 from Legionella pneumophila (strain Paris).